Consider the following 130-residue polypeptide: Blasticidin-S deaminase (130 aa).

The CMP/dCMP-type deaminase domain occupies 1–129 (MPLSQEESTL…ELLPSGYVWE (129 aa)). S28 contacts substrate. C54 provides a ligand contact to Zn(2+). The active-site Proton donor is the E56. A substrate-binding site is contributed by R82. Zn(2+) is bound by residues C88 and C91. Residues Y126 and W128 each coordinate substrate.

Belongs to the cytidine and deoxycytidylate deaminase family. As to quaternary structure, homotetramer. Zn(2+) serves as cofactor.

It carries out the reaction blasticidin S + H2O + H(+) = deaminohydroxyblasticidin S + NH4(+). In terms of biological role, catalyzes the deamination of the cytosine moiety of the antibiotics blasticidin S, cytomycin and acetylblasticidin S. The polypeptide is Blasticidin-S deaminase (bsd) (Aspergillus terreus).